The chain runs to 889 residues: Translation initiation factor IF-2 (889 aa).

A compositionally biased stretch (basic and acidic residues) spans 115–236 (EAEAQAKAEA…EAERYSDHHI (122 aa)). Residues 115–293 (EAEAQAKAEA…RNRSTAPESM (179 aa)) form a disordered region. The span at 257 to 270 (GRRARNKNTAKTKR) shows a compositional bias: basic residues. Residues 271–280 (GGKDARDGRE) show a composition bias toward basic and acidic residues. One can recognise a tr-type G domain in the interval 389-558 (PRAPVVTIMG…LLQAEVLELK (170 aa)). A G1 region spans residues 398-405 (GHVDHGKT). 398–405 (GHVDHGKT) contacts GTP. Residues 423-427 (GITQH) are G2. Residues 444–447 (DTPG) form a G3 region. GTP is bound by residues 444-448 (DTPGH) and 498-501 (NKMD). The segment at 498–501 (NKMD) is G4. The segment at 534 to 536 (SAK) is G5.

The protein belongs to the TRAFAC class translation factor GTPase superfamily. Classic translation factor GTPase family. IF-2 subfamily.

The protein resides in the cytoplasm. Its function is as follows. One of the essential components for the initiation of protein synthesis. Protects formylmethionyl-tRNA from spontaneous hydrolysis and promotes its binding to the 30S ribosomal subunits. Also involved in the hydrolysis of GTP during the formation of the 70S ribosomal complex. In Shewanella sp. (strain ANA-3), this protein is Translation initiation factor IF-2.